The sequence spans 259 residues: Type III pantothenate kinase (259 aa).

An ATP-binding site is contributed by 6-13; that stretch reads DVGNTNCT. A substrate-binding site is contributed by 107 to 110; sequence GSDR. The active-site Proton acceptor is the Asp109. Position 129 (Asp129) interacts with K(+). Thr132 contacts ATP. Substrate is bound at residue Thr184.

The protein belongs to the type III pantothenate kinase family. Homodimer. It depends on NH4(+) as a cofactor. Requires K(+) as cofactor.

Its subcellular location is the cytoplasm. The enzyme catalyses (R)-pantothenate + ATP = (R)-4'-phosphopantothenate + ADP + H(+). Its pathway is cofactor biosynthesis; coenzyme A biosynthesis; CoA from (R)-pantothenate: step 1/5. Functionally, catalyzes the phosphorylation of pantothenate (Pan), the first step in CoA biosynthesis. This Listeria monocytogenes serovar 1/2a (strain ATCC BAA-679 / EGD-e) protein is Type III pantothenate kinase.